Reading from the N-terminus, the 199-residue chain is MKLRRIAEAKLPTPFGEFLMVGFEEIATGKDHVALVFGDISGTKPVLSRIHSECLTGDALFSLRCDCGFQLEAALSQISKEGRGVLLYHRQEGRNIGLLNKIRAYALQDQGLDTVEANLKLGFKADERDFTLCADMYNLLGIHEVRLLTNNPKKIEIMKEAGINVVERVPLIVGRNPSNAHYLDTKADKMGHMLFKKAQ.

A GTP-binding site is contributed by 49–53 (RIHSE). Zn(2+) contacts are provided by cysteine 54, cysteine 65, and cysteine 67. GTP-binding positions include glutamine 70, 92–94 (EGR), and threonine 114. Catalysis depends on aspartate 126, which acts as the Proton acceptor. Arginine 128 (nucleophile) is an active-site residue. Residues threonine 149 and lysine 154 each coordinate GTP.

This sequence belongs to the GTP cyclohydrolase II family. In terms of assembly, homodimer. It depends on Zn(2+) as a cofactor.

It carries out the reaction GTP + 4 H2O = 2,5-diamino-6-hydroxy-4-(5-phosphoribosylamino)-pyrimidine + formate + 2 phosphate + 3 H(+). Its pathway is cofactor biosynthesis; riboflavin biosynthesis; 5-amino-6-(D-ribitylamino)uracil from GTP: step 1/4. Its function is as follows. Catalyzes the conversion of GTP to 2,5-diamino-6-ribosylamino-4(3H)-pyrimidinone 5'-phosphate (DARP), formate and pyrophosphate. In Proteus mirabilis (strain HI4320), this protein is GTP cyclohydrolase-2.